Here is a 128-residue protein sequence, read N- to C-terminus: Ribonuclease P protein component (128 aa).

Belongs to the RnpA family. As to quaternary structure, consists of a catalytic RNA component (M1 or rnpB) and a protein subunit.

The enzyme catalyses Endonucleolytic cleavage of RNA, removing 5'-extranucleotides from tRNA precursor.. Functionally, RNaseP catalyzes the removal of the 5'-leader sequence from pre-tRNA to produce the mature 5'-terminus. It can also cleave other RNA substrates such as 4.5S RNA. The protein component plays an auxiliary but essential role in vivo by binding to the 5'-leader sequence and broadening the substrate specificity of the ribozyme. The sequence is that of Ribonuclease P protein component from Synechococcus sp. (strain CC9902).